A 216-amino-acid polypeptide reads, in one-letter code: Somatotropin (216 aa).

Residues 1 to 26 (MAAGPRTSALLAFALLCLPWTREVGA) form the signal peptide. His-45 is a Zn(2+) binding site. Cysteines 78 and 189 form a disulfide. Ser-131 is modified (phosphoserine). A Zn(2+)-binding site is contributed by Glu-198. The cysteines at positions 206 and 214 are disulfide-linked.

This sequence belongs to the somatotropin/prolactin family.

It is found in the secreted. Plays an important role in growth control. Its major role in stimulating body growth is to stimulate the liver and other tissues to secrete IGF1. It stimulates both the differentiation and proliferation of myoblasts. It also stimulates amino acid uptake and protein synthesis in muscle and other tissues. The polypeptide is Somatotropin (GH1) (Sus scrofa (Pig)).